A 467-amino-acid chain; its full sequence is Tel2-interacting protein 2 (467 aa).

Positions 4–45 (YKELARRLHTLQSKNEKEALEKQIDFLDKLVVEVDSLVHEQD) form a coiled coil.

Belongs to the TTI2 family. Component of the TTT complex composed of tel2, tti1 and tti2. Interacts with tel2 and ttiI1. Component of the ASTRA complex composed of at least rvb1, rvb2, tra1, tel2, tti1 and tti2.

The protein resides in the nucleus. Component of the tel2-tti1-tti2 (TTT) complex that stabilizes protein levels of the phosphatidylinositol 3-kinase-related protein kinase (PIKK) family proteins. The TTT complex is involved in the cellular resistance to DNA damage stresses, like ionizing radiation (IR), ultraviolet (UV) and mitomycin C (MMC). Component of the ASTRA complex involved in chromatin remodeling. The chain is Tel2-interacting protein 2 from Schizosaccharomyces pombe (strain 972 / ATCC 24843) (Fission yeast).